Consider the following 275-residue polypeptide: 2,3,4,5-tetrahydropyridine-2,6-dicarboxylate N-succinyltransferase (275 aa).

It belongs to the transferase hexapeptide repeat family.

The protein resides in the cytoplasm. It carries out the reaction (S)-2,3,4,5-tetrahydrodipicolinate + succinyl-CoA + H2O = (S)-2-succinylamino-6-oxoheptanedioate + CoA. It functions in the pathway amino-acid biosynthesis; L-lysine biosynthesis via DAP pathway; LL-2,6-diaminopimelate from (S)-tetrahydrodipicolinate (succinylase route): step 1/3. In Paraburkholderia phytofirmans (strain DSM 17436 / LMG 22146 / PsJN) (Burkholderia phytofirmans), this protein is 2,3,4,5-tetrahydropyridine-2,6-dicarboxylate N-succinyltransferase.